We begin with the raw amino-acid sequence, 200 residues long: Eukaryotic translation initiation factor isoform 4E (200 aa).

MRNA-binding positions include 44-49 (QGVAWG), K76, and 94-95 (WE). The cysteines at positions 99 and 138 are disulfide-linked. Residues 145–150 (RRSQDK) and 189–192 (KRER) contribute to the mRNA site.

The protein belongs to the eukaryotic initiation factor 4E family. EIF4F is a multi-subunit complex, the composition of which varies with external and internal environmental conditions. It is composed of at least EIF4A, EIF4E and EIF4G. EIF4E is also known to interact with other partners. In higher plants two isoforms of EIF4F have been identified, named isoform EIF4F and isoform EIF(iso)4F. Isoform EIF4F has subunits p220 and p26, whereas isoform EIF(iso)4F has subunits p82 and p28. As to quaternary structure, (Microbial infection) Interacts with viral genome-linked protein (VPg); this interaction is possible in susceptible hosts but impaired in resistant plants. Post-translationally, according to the redox status, the Cys-99-Cys-138 disulfide bridge may have a role in regulating protein function by affecting its ability to bind capped mRNA. Mostly expressed in roots and leaves, and, to a lower extent, in stems, flowers and immature green fruits.

The protein localises to the cytoplasm. Its subcellular location is the nucleus. Component of the protein complex eIF4F, which is involved in the recognition of the mRNA cap, ATP-dependent unwinding of 5'-terminal secondary structure and recruitment of mRNA to the ribosome. Recognizes and binds the 7-methylguanosine-containing mRNA cap during an early step in the initiation of protein synthesis and facilitates ribosome binding by inducing the unwinding of the mRNAs secondary structures. Key component of recessive resistance to potyviruses. Functionally, (Microbial infection) Susceptibility host factor required for viral infection by recruiting viral RNAs to the host ribosomal complex via an interaction with viral genome-linked protein (VPg). The polypeptide is Eukaryotic translation initiation factor isoform 4E (Solanum lycopersicum (Tomato)).